Consider the following 134-residue polypeptide: L-ectoine synthase (134 aa).

It belongs to the ectoine synthase family.

The catalysed reaction is (2S)-4-acetamido-2-aminobutanoate = L-ectoine + H2O. It functions in the pathway amine and polyamine biosynthesis; ectoine biosynthesis; L-ectoine from L-aspartate 4-semialdehyde: step 3/3. In terms of biological role, catalyzes the circularization of gamma-N-acetyl-alpha,gamma-diaminobutyric acid (ADABA) to ectoine (1,4,5,6-tetrahydro-2-methyl-4-pyrimidine carboxylic acid), which is an excellent osmoprotectant. This is L-ectoine synthase from Shouchella clausii (strain KSM-K16) (Alkalihalobacillus clausii).